The following is a 177-amino-acid chain: ATP synthase subunit delta (177 aa).

This sequence belongs to the ATPase delta chain family. As to quaternary structure, F-type ATPases have 2 components, F(1) - the catalytic core - and F(0) - the membrane proton channel. F(1) has five subunits: alpha(3), beta(3), gamma(1), delta(1), epsilon(1). F(0) has three main subunits: a(1), b(2) and c(10-14). The alpha and beta chains form an alternating ring which encloses part of the gamma chain. F(1) is attached to F(0) by a central stalk formed by the gamma and epsilon chains, while a peripheral stalk is formed by the delta and b chains.

The protein resides in the cell inner membrane. In terms of biological role, f(1)F(0) ATP synthase produces ATP from ADP in the presence of a proton or sodium gradient. F-type ATPases consist of two structural domains, F(1) containing the extramembraneous catalytic core and F(0) containing the membrane proton channel, linked together by a central stalk and a peripheral stalk. During catalysis, ATP synthesis in the catalytic domain of F(1) is coupled via a rotary mechanism of the central stalk subunits to proton translocation. This protein is part of the stalk that links CF(0) to CF(1). It either transmits conformational changes from CF(0) to CF(1) or is implicated in proton conduction. This is ATP synthase subunit delta from Shewanella loihica (strain ATCC BAA-1088 / PV-4).